A 428-amino-acid polypeptide reads, in one-letter code: GTPase Obg (428 aa).

In terms of domain architecture, Obg spans 1–158; the sequence is MFIDKAKVFI…LSIVLELKLL (158 aa). Residues 159-331 enclose the OBG-type G domain; sequence ADVGLLGFPN…VIKEAARMLK (173 aa). GTP is bound by residues 165–172, 190–194, 212–215, 282–285, and 312–314; these read GFPNVGKS, FTTLK, DIPG, NKSD, and SAA. Mg(2+) is bound by residues serine 172 and threonine 192. Residues 345-428 form the OCT domain; the sequence is MYIPEEKRFT…LNDFEFEYLL (84 aa).

Belongs to the TRAFAC class OBG-HflX-like GTPase superfamily. OBG GTPase family. Monomer. The cofactor is Mg(2+).

Its subcellular location is the cytoplasm. Functionally, an essential GTPase which binds GTP, GDP and possibly (p)ppGpp with moderate affinity, with high nucleotide exchange rates and a fairly low GTP hydrolysis rate. Plays a role in control of the cell cycle, stress response, ribosome biogenesis and in those bacteria that undergo differentiation, in morphogenesis control. The protein is GTPase Obg of Clostridium botulinum (strain Eklund 17B / Type B).